The sequence spans 305 residues: MDMLTLWNLEREDMEKILEDSIYFKKNRYGHDILKNKNIALIFESPSTRTRMSFDLAVNELGGHSMVMNENEIHLGKKESIKDTAKVMSRFVDVIVARVKSHKTLEDLAFYGTVPVINALSDLSHPCQVLADLLTIKENGKDFKNLKLAYFGDGNNVSNSLMIAGAILGMNIFIATPRSYEPNGIFVKKALEIIAKYGEGSLTLTDDPIEASKNADVLYTDVWISMSDKNKDLEDVKRIFPKFQINSKLLSNAKKDAMVLHCLPANRGMEITDEVIDSKQSKVFDQAENRLHVQKAVLKYVLKDK.

Carbamoyl phosphate contacts are provided by residues S47 to T50, R98, and H125 to Q128. L-ornithine contacts are provided by residues N156, D221, and S225–M226. Carbamoyl phosphate is bound by residues C262–L263 and R290.

This sequence belongs to the aspartate/ornithine carbamoyltransferase superfamily. OTCase family.

It localises to the cytoplasm. It carries out the reaction carbamoyl phosphate + L-ornithine = L-citrulline + phosphate + H(+). It functions in the pathway amino-acid biosynthesis; L-arginine biosynthesis; L-arginine from L-ornithine and carbamoyl phosphate: step 1/3. Functionally, reversibly catalyzes the transfer of the carbamoyl group from carbamoyl phosphate (CP) to the N(epsilon) atom of ornithine (ORN) to produce L-citrulline. This Methanococcus vannielii (strain ATCC 35089 / DSM 1224 / JCM 13029 / OCM 148 / SB) protein is Ornithine carbamoyltransferase.